The sequence spans 121 residues: Large ribosomal subunit protein bL17 (121 aa).

This sequence belongs to the bacterial ribosomal protein bL17 family. Part of the 50S ribosomal subunit. Contacts protein L32.

This is Large ribosomal subunit protein bL17 from Mycoplasmopsis agalactiae (strain NCTC 10123 / CIP 59.7 / PG2) (Mycoplasma agalactiae).